The sequence spans 386 residues: Peroxisomal membrane protein PEX13 (386 aa).

A disordered region spans residues 1–76 (MSSTAVPRPK…SSGTYGESNT (76 aa)). At 1–263 (MSSTAVPRPK…KATRRKISWK (263 aa)) the chain is on the lumenal side. Residues 23-39 (RNAQSLSAMMTSNQQDS) are compositionally biased toward polar residues. Over residues 44–55 (ESNNSNSASESA) the composition is skewed to low complexity. The span at 65 to 76 (LNSSGTYGESNT) shows a compositional bias: polar residues. The helical transmembrane segment at 264 to 280 (PLLFFLMAVFGFPYLLN) threads the bilayer. Over 281-386 (KFITKLQTSG…EHVDDETRTH (106 aa)) the chain is Cytoplasmic. An SH3 domain is found at 306–372 (SKLEFARALY…PYNYIEIIKR (67 aa)).

Belongs to the peroxin-13 family. As to quaternary structure, interacts (via SH3 domain) with PEX14 (via SH3-binding motif); forming the PEX13-PEX14 docking complex.

The protein localises to the peroxisome membrane. Its function is as follows. Component of the PEX13-PEX14 docking complex, a translocon channel that specifically mediates the import of peroxisomal cargo proteins bound to PEX5 or PEX21 receptors. The PEX13-PEX14 docking complex forms a large import pore which can be opened to a diameter of about 9 nm. Mechanistically, PEX5 (or PEX21) receptor along with cargo proteins associates with the PEX14 subunit of the PEX13-PEX14 docking complex in the cytosol, leading to the insertion of the receptor into the organelle membrane with the concomitant translocation of the cargo into the peroxisome matrix. The polypeptide is Peroxisomal membrane protein PEX13 (Saccharomyces cerevisiae (strain ATCC 204508 / S288c) (Baker's yeast)).